We begin with the raw amino-acid sequence, 309 residues long: GTP cyclohydrolase MptA (309 aa).

This sequence belongs to the GTP cyclohydrolase IV family. In terms of assembly, homodimer. Fe(2+) serves as cofactor.

It carries out the reaction GTP + H2O = 7,8-dihydroneopterin 2',3'-cyclic phosphate + formate + diphosphate + H(+). Its pathway is cofactor biosynthesis; 5,6,7,8-tetrahydromethanopterin biosynthesis. Its function is as follows. Converts GTP to 7,8-dihydro-D-neopterin 2',3'-cyclic phosphate, the first intermediate in the biosynthesis of coenzyme methanopterin. This chain is GTP cyclohydrolase MptA, found in Haloarcula marismortui (strain ATCC 43049 / DSM 3752 / JCM 8966 / VKM B-1809) (Halobacterium marismortui).